A 238-amino-acid polypeptide reads, in one-letter code: B-box zinc finger protein 25 (238 aa).

Zn(2+) contacts are provided by Cys5, Cys8, Cys28, His33, Cys57, Cys60, Cys80, and His85. The B box-type 1; atypical zinc-finger motif lies at 5–47 (CDVCEKAPATLICCADEAALCAKCDVEVHAANKLASKHQRLFL). The B box-type 2; atypical zinc finger occupies 57 to 99 (CDICLEKAAFIFCVEDRALLCRDCDEATHAPNTRSANHQRFLA). A disordered region spans residues 115-139 (VEKNHFDPSNQQSLSKPPTQQPAAP). The segment covering 121-137 (DPSNQQSLSKPPTQQPA) has biased composition (polar residues). The interval 226-238 (DDEEEHFLVPDLG) is interaction with COP1.

Interacts with COP1 WD40 domain. Interacts with HY5 and HYH. Post-translationally, COP1-mediated ubiquitination and subsequent proteasomal degradation of BBX25/STH occurs in the dark.

The protein localises to the nucleus. Its function is as follows. Acts as a negative regulator of seedling photomorphogenesis. BBX25/STH and BBX24/STO function as transcriptional corepressors of HY5 activity, leading to the down-regulation of BBX22 expression. BBX25/STH acts additively with BBX24/STO during de-etiolation and the hypocotyl shade avoidance response. In Arabidopsis thaliana (Mouse-ear cress), this protein is B-box zinc finger protein 25.